The primary structure comprises 126 residues: uncharacterized protein (126 aa).

An N-terminal signal peptide occupies residues 1-24 (MKMTKLATLFLTATLSLASGAALA). The span at 27–47 (SGAQTNNGQANAAADAGQVAP) shows a compositional bias: low complexity. Positions 27-126 (SGAQTNNGQA…VDTKTDGTTQ (100 aa)) are disordered. The span at 54–64 (APNNVDNNGVN) shows a compositional bias: polar residues. Composition is skewed to basic and acidic residues over residues 84 to 105 (MTKDEEHKNTMCKDGRCPDINK) and 117 to 126 (VDTKTDGTTQ).

This is an uncharacterized protein from Shigella flexneri.